The following is a 142-amino-acid chain: HTH-type transcriptional regulator MntR (142 aa).

One can recognise an HTH dtxR-type domain in the interval 1 to 63 (MPTPSMEDYI…YEKYRGLVLT (63 aa)). Residues aspartate 8, glutamate 11, histidine 77, glutamate 99, glutamate 102, and histidine 103 each coordinate Mn(2+).

It belongs to the DtxR/MntR family. Homodimer.

The protein localises to the cytoplasm. DNA binding is strongly activated by Mn(2+). Central regulator of manganese homeostasis. In Bacillus cereus (strain ATCC 14579 / DSM 31 / CCUG 7414 / JCM 2152 / NBRC 15305 / NCIMB 9373 / NCTC 2599 / NRRL B-3711), this protein is HTH-type transcriptional regulator MntR.